The primary structure comprises 374 residues: uncharacterized protein (374 aa).

The disordered stretch occupies residues 1–46 (MVNEEEKDLTAEGDSNNTGVSPDSIKNKTLDFYPKEKTTERKTRSR). Basic and acidic residues predominate over residues 25 to 46 (IKNKTLDFYPKEKTTERKTRSR). 6 helical membrane passes run 70–90 (YAYI…FIAA), 127–147 (WVFY…KIGI), 153–173 (TIVY…IPVI), 199–219 (IWLF…YGLV), 242–262 (ISIA…MLAI), and 312–332 (YFFG…AITI).

It to M.genitalium MG432 and MG443.

It is found in the cell membrane. This is an uncharacterized protein from Spiroplasma citri.